The chain runs to 66 residues: Opicalcin-2 (66 aa).

The signal sequence occupies residues 1-22 (MKPSLIIVTFIVVFMTISCVAA). Residues 23–31 (DDEQETWIE) constitute a propeptide that is removed on maturation. 3 disulfide bridges follow: Cys-36/Cys-50, Cys-43/Cys-54, and Cys-49/Cys-65. Residues 55–57 (KRR) form an essential for stimulation of [3H]ryanodine binding to RYR1 region.

Belongs to the scorpion calcin family. In terms of tissue distribution, expressed by the venom gland.

The protein resides in the secreted. This toxin stabilizes ryanodine receptor 1 (RyR1) opening in a long-lasting subconductance state (40% of the full conductance state). Furthermore, it triggers calcium release from sarcoplasmic vesicles (64.2 nM are enough to induce a sharp release, and 50% of the total calcium is released after toxin (100 nM) addition) probably by acting as a cell-penetrating peptide (CPP). In addition, it has been shown to dose-dependently stimulate ryanodine binding to RyR1 (EC(50)=3.2 nM). It also augments the bell-shaped calcium-[3H]ryanodine binding curve that is maximal at about 10 uM calcium concentration. It binds a different site as ryanodine. It acts synergistically with caffeine. In vivo, intracerebroventricular injection into mice induces neurotoxic symptoms, followed by death. The polypeptide is Opicalcin-2 (Opistophthalmus carinatus (African yellow leg scorpion)).